The primary structure comprises 186 residues: MHALSQEPTVWHGTTILTVRKGGRVVVGGDGQVSIGQTVIKSNARKVRKLGKGDVIGGFAGATADAFTLFERLESKLEQYPGQLTRAAVELAKDWRTDRYLRRLEAMMIVADKEVSLVLTGTGDVLEPEAGVMAIGSGGNYALAAARALIDTDKDAESIVRKSLDIAADICVYTNRNITIEALSAE.

Thr-14 is a catalytic residue. Na(+) is bound by residues Ala-168, Cys-171, and Thr-174.

This sequence belongs to the peptidase T1B family. HslV subfamily. A double ring-shaped homohexamer of HslV is capped on each side by a ring-shaped HslU homohexamer. The assembly of the HslU/HslV complex is dependent on binding of ATP.

It localises to the cytoplasm. It carries out the reaction ATP-dependent cleavage of peptide bonds with broad specificity.. With respect to regulation, allosterically activated by HslU binding. Functionally, protease subunit of a proteasome-like degradation complex believed to be a general protein degrading machinery. This chain is ATP-dependent protease subunit HslV, found in Bradyrhizobium sp. (strain ORS 278).